The sequence spans 483 residues: Glutamate--tRNA ligase (483 aa).

The 'HIGH' region motif lies at 11 to 21 (PSPTGHLHIGN). Cys108, Cys110, Cys135, and His137 together coordinate Zn(2+). The short motif at 252–256 (KLSKR) is the 'KMSKS' region element. ATP is bound at residue Lys255.

Belongs to the class-I aminoacyl-tRNA synthetase family. Glutamate--tRNA ligase type 1 subfamily. In terms of assembly, monomer. Zn(2+) serves as cofactor.

Its subcellular location is the cytoplasm. The catalysed reaction is tRNA(Glu) + L-glutamate + ATP = L-glutamyl-tRNA(Glu) + AMP + diphosphate. Functionally, catalyzes the attachment of glutamate to tRNA(Glu) in a two-step reaction: glutamate is first activated by ATP to form Glu-AMP and then transferred to the acceptor end of tRNA(Glu). This Bacillus pumilus (strain SAFR-032) protein is Glutamate--tRNA ligase.